The following is a 390-amino-acid chain: GTPase Obg (390 aa).

Positions 1–159 (MKFIDESLIR…RDLLLELMLL (159 aa)) constitute an Obg domain. Residues 160-333 (ADVGMLGLPN…LCRDIMDFII (174 aa)) form the OBG-type G domain. GTP-binding positions include 166–173 (GLPNAGKS), 191–195 (FTTLV), 213–216 (DIPG), 283–286 (NKID), and 314–316 (SAA). Mg(2+) contacts are provided by Ser-173 and Thr-193. The interval 363-382 (EHQFDDDEDWDDDWSEEDDE) is disordered. Over residues 366–382 (FDDDEDWDDDWSEEDDE) the composition is skewed to acidic residues.

Belongs to the TRAFAC class OBG-HflX-like GTPase superfamily. OBG GTPase family. In terms of assembly, monomer. Mg(2+) is required as a cofactor.

It is found in the cytoplasm. Its function is as follows. An essential GTPase which binds GTP, GDP and possibly (p)ppGpp with moderate affinity, with high nucleotide exchange rates and a fairly low GTP hydrolysis rate. Plays a role in control of the cell cycle, stress response, ribosome biogenesis and in those bacteria that undergo differentiation, in morphogenesis control. In Haemophilus influenzae (strain ATCC 51907 / DSM 11121 / KW20 / Rd), this protein is GTPase Obg.